The primary structure comprises 116 residues: Class I hydrophobin 1 (116 aa).

A signal peptide spans 1-19 (MLFKQAILVATTLTTLAVA). Intrachain disulfides connect cysteine 35/cysteine 95, cysteine 42/cysteine 89, cysteine 43/cysteine 76, and cysteine 96/cysteine 109. Residues asparagine 44 and asparagine 100 are each glycosylated (N-linked (GlcNAc...) asparagine).

It belongs to the fungal hydrophobin family. Self-assembles to form functional amyloid fibrils called rodlets. Self-assembly into fibrillar rodlets occurs spontaneously at hydrophobic:hydrophilic interfaces and the rodlets further associate laterally to form amphipathic monolayers.

It is found in the secreted. The protein resides in the cell wall. Aerial growth, conidiation, and dispersal of filamentous fungi in the environment rely upon a capability of their secreting small amphipathic proteins called hydrophobins (HPBs) with low sequence identity. Class I can self-assemble into an outermost layer of rodlet bundles on aerial cell surfaces, conferring cellular hydrophobicity that supports fungal growth, development and dispersal; whereas Class II form highly ordered films at water-air interfaces through intermolecular interactions but contribute nothing to the rodlet structure. The polypeptide is Class I hydrophobin 1 (Pleurotus ostreatus (strain PC15) (Oyster mushroom)).